The sequence spans 356 residues: 1-acyl-sn-glycerol-3-phosphate acyltransferase LPAT1, chloroplastic (356 aa).

A chloroplast-targeting transit peptide spans 1-56 (MDVASARSISSHPSYYGKPICSSQSSLIRISRDKVCCFGRISNGMTSFTTSLHAVP). Residues 127–147 (GIFFCVVAGISATFLIVLMII) form a helical membrane-spanning segment. The HXXXXD motif signature appears at 202–207 (HQSFLD). The chain crosses the membrane as a helical span at residues 224–244 (TGIFVIPIIGWAMSMMGVVPL).

This sequence belongs to the 1-acyl-sn-glycerol-3-phosphate acyltransferase family. In terms of tissue distribution, widely expressed. Expressed at higher level in leaves. Expressed at lower level in silique walls compared to leaves.

The protein resides in the plastid. It is found in the chloroplast membrane. The catalysed reaction is a fatty acyl-[ACP] + a 1-acyl-sn-glycero-3-phosphate = a 1,2-diacyl-sn-glycero-3-phosphate + holo-[ACP]. It carries out the reaction a 1-acyl-sn-glycero-3-phosphate + an acyl-CoA = a 1,2-diacyl-sn-glycero-3-phosphate + CoA. Its pathway is phospholipid metabolism; CDP-diacylglycerol biosynthesis; CDP-diacylglycerol from sn-glycerol 3-phosphate: step 2/3. Functionally, plastidial enzyme of the prokaryotic glycerol-3-phosphate pathway that converts lysophosphatidic acid (LPA) into phosphatidic acid by incorporating an acyl moiety at position sn-2. Utilizes palmitoyl-ACP (16:0-ACP) to produce phosphatidic acid containing a saturated group at position sn-2, which is characteristic of lipids synthesized by the prokaryotic pathway. In vitro, can use 16:0-CoA as acyl donor. Essential for embryo development during the transition from the globular to the heart stage when chloroplasts begin to form. The sequence is that of 1-acyl-sn-glycerol-3-phosphate acyltransferase LPAT1, chloroplastic from Arabidopsis thaliana (Mouse-ear cress).